The following is a 632-amino-acid chain: tRNA endonuclease VMS1 (632 aa).

A C2H2-type zinc finger spans residues 72–96 (MRCSVCQMSFDSRNEQKAHYQTDYH). The interval 123-155 (HGIKSEDENSGGEQTSSDHEESEEASDRDPDLQ) is disordered. The region spanning 232–392 (PMAISALFMV…KKAWCELSYL (161 aa)) is the VLRF1 domain. Q295 is an active-site residue. ANK repeat units follow at residues 470-500 (LTPT…DPTI) and 504-530 (LGRT…NLGE). Coiled coils occupy residues 544-582 (LSRE…QRFA) and 608-632 (TDEQ…KKKY). The segment covering 578–589 (KQRFAKDAERGP) has biased composition (basic and acidic residues). The disordered stretch occupies residues 578-632 (KQRFAKDAERGPGKKLTNIPSIQQQNLNSLTDEQRRRLMREQRARAAEERMKKKY). A compositionally biased stretch (polar residues) spans 595–608 (NIPSIQQQNLNSLT). Over residues 609–632 (DEQRRRLMREQRARAAEERMKKKY) the composition is skewed to basic and acidic residues.

This sequence belongs to the ANKZF1/VMS1 family. As to quaternary structure, associates with 60S ribosomal subunit. Interacts with CDC48. Interacts with NPL4.

The protein localises to the cytoplasm. Its subcellular location is the mitochondrion. It is found in the endoplasmic reticulum membrane. Its function is as follows. Endonuclease that cleaves polypeptidyl-tRNAs downstream of the ribosome-associated quality control (RQC) pathway to release incompletely synthesized polypeptides for degradation. The RQC pathway disassembles aberrantly stalled translation complexes to recycle or degrade the constituent parts. VMS1 acts downstream disassembly of stalled ribosomes and specifically cleaves off the terminal 3'-CCA nucleotides universal to all tRNAs from polypeptidyl-tRNAs, releasing (1) ubiquitinated polypeptides from 60S ribosomal subunit for degradation by the ERAD pathway and (2) cleaved tRNAs for recycling. Component of an evolutionarily conserved system for ubiquitin-mediated mitochondria-associated protein degradation (MAD), which is necessary to maintain mitochondrial, cellular, and organismal viability. This is tRNA endonuclease VMS1 from Saccharomyces cerevisiae (strain ATCC 204508 / S288c) (Baker's yeast).